A 231-amino-acid polypeptide reads, in one-letter code: MTEANGTTGGGAGDPEVIDVRRGMFGAKGSGDTSGYGRLIRSVALPGGSPRPYGGHFDEVVDALAAALGQDLYDASVERIVVYRDELTLEIARARLPVVAKTLRDDAALRFELCLGVSGVHYPGDAGRELHAAYPLMSITHNRRIRLEVAAPDDDPHIPSLFSVYPTTDWHERETYDFFGIIFDGHPSLTRIEMPDDWVGHPQRKDYPLGGIPVEYHGARIPPPDERRAYN.

The protein belongs to the complex I 30 kDa subunit family. NDH-1 is composed of 14 different subunits. Subunits NuoB, C, D, E, F, and G constitute the peripheral sector of the complex.

It is found in the cell membrane. It carries out the reaction a quinone + NADH + 5 H(+)(in) = a quinol + NAD(+) + 4 H(+)(out). NDH-1 shuttles electrons from NADH, via FMN and iron-sulfur (Fe-S) centers, to quinones in the respiratory chain. The immediate electron acceptor for the enzyme in this species is believed to be a menaquinone. Couples the redox reaction to proton translocation (for every two electrons transferred, four hydrogen ions are translocated across the cytoplasmic membrane), and thus conserves the redox energy in a proton gradient. This chain is NADH-quinone oxidoreductase subunit C, found in Mycobacterium sp. (strain JLS).